Consider the following 269-residue polypeptide: MPELPEVEVSRMGITPHMVGQTVTKIIVRNPKLRWPIPEEIQQIEGQVIRKVTRRAKYLLLHTDVGYAIVHLGMSGSLRILPASIPPEKHDHVDLVLSSGEVLRYNDPRRFGAWLWGLPDLDHKVLSQLGPEPLSNDFTAEYLQERAKGKRTAIKQFIMDNKVVVGVGNIYANESLFSAGIHPKRAAGEISPEKIALFVDEIKSVLAFAIEQGGTTLKDFKNADGKPGYFAQELQVYGKGGKPCPRCDNPLSEMKIGQRASVFCSECQK.

Proline 2 functions as the Schiff-base intermediate with DNA in the catalytic mechanism. Glutamate 3 acts as the Proton donor in catalysis. Lysine 57 serves as the catalytic Proton donor; for beta-elimination activity. The DNA site is built by histidine 90, arginine 109, and lysine 150. Residues 235 to 269 form an FPG-type zinc finger; that stretch reads QVYGKGGKPCPRCDNPLSEMKIGQRASVFCSECQK. Residue arginine 259 is the Proton donor; for delta-elimination activity of the active site.

This sequence belongs to the FPG family. As to quaternary structure, monomer. Requires Zn(2+) as cofactor.

It carries out the reaction Hydrolysis of DNA containing ring-opened 7-methylguanine residues, releasing 2,6-diamino-4-hydroxy-5-(N-methyl)formamidopyrimidine.. It catalyses the reaction 2'-deoxyribonucleotide-(2'-deoxyribose 5'-phosphate)-2'-deoxyribonucleotide-DNA = a 3'-end 2'-deoxyribonucleotide-(2,3-dehydro-2,3-deoxyribose 5'-phosphate)-DNA + a 5'-end 5'-phospho-2'-deoxyribonucleoside-DNA + H(+). Functionally, involved in base excision repair of DNA damaged by oxidation or by mutagenic agents. Acts as a DNA glycosylase that recognizes and removes damaged bases. Has a preference for oxidized purines, such as 7,8-dihydro-8-oxoguanine (8-oxoG). Has AP (apurinic/apyrimidinic) lyase activity and introduces nicks in the DNA strand. Cleaves the DNA backbone by beta-delta elimination to generate a single-strand break at the site of the removed base with both 3'- and 5'-phosphates. The sequence is that of Formamidopyrimidine-DNA glycosylase from Photobacterium profundum (strain SS9).